The sequence spans 435 residues: Xylose isomerase (435 aa).

Residues H99 and D102 contribute to the active site. Mg(2+) is bound by residues E230, E266, H269, D294, D305, D307, and D337.

This sequence belongs to the xylose isomerase family. Homotetramer. Mg(2+) serves as cofactor.

The protein resides in the cytoplasm. It carries out the reaction alpha-D-xylose = alpha-D-xylulofuranose. This Listeria welshimeri serovar 6b (strain ATCC 35897 / DSM 20650 / CCUG 15529 / CIP 8149 / NCTC 11857 / SLCC 5334 / V8) protein is Xylose isomerase.